A 345-amino-acid chain; its full sequence is Protein RecA (345 aa).

Residue 81–88 coordinates ATP; it reads GPESSGKT.

This sequence belongs to the RecA family.

The protein resides in the cytoplasm. Can catalyze the hydrolysis of ATP in the presence of single-stranded DNA, the ATP-dependent uptake of single-stranded DNA by duplex DNA, and the ATP-dependent hybridization of homologous single-stranded DNAs. It interacts with LexA causing its activation and leading to its autocatalytic cleavage. The chain is Protein RecA from Mycoplasma mycoides.